The sequence spans 386 residues: Succinate--CoA ligase [ADP-forming] subunit beta (386 aa).

In terms of domain architecture, ATP-grasp spans 9 to 244; the sequence is KEILRKYGVP…HDEEDPLETR (236 aa). ATP contacts are provided by residues Lys-46, 53-55, Glu-99, Cys-102, and Glu-107; that span reads GRG. Mg(2+)-binding residues include Asn-199 and Asp-213. Substrate is bound by residues Asn-264 and 321 to 323; that span reads GIM.

It belongs to the succinate/malate CoA ligase beta subunit family. Heterotetramer of two alpha and two beta subunits. Mg(2+) is required as a cofactor.

It catalyses the reaction succinate + ATP + CoA = succinyl-CoA + ADP + phosphate. The enzyme catalyses GTP + succinate + CoA = succinyl-CoA + GDP + phosphate. The protein operates within carbohydrate metabolism; tricarboxylic acid cycle; succinate from succinyl-CoA (ligase route): step 1/1. Its function is as follows. Succinyl-CoA synthetase functions in the citric acid cycle (TCA), coupling the hydrolysis of succinyl-CoA to the synthesis of either ATP or GTP and thus represents the only step of substrate-level phosphorylation in the TCA. The beta subunit provides nucleotide specificity of the enzyme and binds the substrate succinate, while the binding sites for coenzyme A and phosphate are found in the alpha subunit. The protein is Succinate--CoA ligase [ADP-forming] subunit beta of Rickettsia rickettsii (strain Iowa).